Here is a 1233-residue protein sequence, read N- to C-terminus: Structural maintenance of chromosomes protein 1A (1233 aa).

32-39 (GPNGSGKS) serves as a coordination point for ATP. Coiled-coil stretches lie at residues 104–124 (EYKINNKVVQLHEYSEELEKL) and 163–503 (ELAQ…KAEI). Residues 284 to 293 (IKEKDSELNQ) are compositionally biased toward basic and acidic residues. Disordered stretches follow at residues 284 to 307 (IKEKDSELNQKRPQYIKAKENTSH) and 350 to 369 (FEERMEEESQSQGRDLTLEE). 2 positions are modified to phosphoserine: Ser358 and Ser360. In terms of domain architecture, SMC hinge spans 515–629 (VYGRLIDLCQ…DNVEDARRIA (115 aa)). N6-acetyllysine is present on residues Lys648 and Lys713. Residues 660-935 (KAKARRWDEK…RHNLLQACKM (276 aa)) adopt a coiled-coil conformation. Residues 946 to 969 (TMDDISQEEGGSQGEESVSGSQRT) are disordered. The span at 953 to 967 (EEGGSQGEESVSGSQ) shows a compositional bias: low complexity. 4 positions are modified to phosphoserine: Ser957, Ser962, Ser966, and Ser970. Positions 991 to 1068 (KDAQAEEEIK…FEQIKKERFD (78 aa)) form a coiled coil. Position 1037 is an N6-acetyllysine (Lys1037).

This sequence belongs to the SMC family. SMC1 subfamily. As to quaternary structure, forms a heterodimer with SMC3 in cohesin complexes. Cohesin complexes are composed of the SMC1 (SMC1A or meiosis-specific SMC1B) and SMC3 heterodimer attached via their SMC hinge domain, RAD21 which link them, and one STAG protein (STAG1, STAG2 or meiosis-specific STAG3), which interacts with RAD21. In germ cell cohesin complexes, SMC1A is mutually exclusive with SMC1B. Found in a complex with CDCA5, SMC3 and RAD21, PDS5A/SCC-112 and PDS5B/APRIN. Interacts with STAG3, NDC80, BRAC1, BRAT1 and RPGR. Found in a complex containing POLE and SMC3. The cohesin complex interacts with the cohesin loading complex subunits NIPBL/Scc2 (via HEAT repeats) and MAU2/Scc4. NIPBL directly contacts all members of the complex, RAD21, SMC1A/B, SMC3 and STAG1. Interacts with SYCP2. In terms of processing, phosphorylated upon ionizing radiation or DNA methylation. Phosphorylation of Ser-957 and Ser-966 activates it and is required for S-phase checkpoint activation. Post-translationally, ubiquitinated by the DCX(DCAF15) complex, leading to its degradation.

It localises to the nucleus. The protein resides in the chromosome. Functionally, involved in chromosome cohesion during cell cycle and in DNA repair. Central component of cohesin complex. The cohesin complex is required for the cohesion of sister chromatids after DNA replication. The cohesin complex apparently forms a large proteinaceous ring within which sister chromatids can be trapped. At anaphase, the complex is cleaved and dissociates from chromatin, allowing sister chromatids to segregate. The cohesin complex may also play a role in spindle pole assembly during mitosis. Involved in DNA repair via its interaction with BRCA1 and its related phosphorylation by ATM, or via its phosphorylation by ATR. Works as a downstream effector both in the ATM/NBS1 branch and in the ATR/MSH2 branch of S-phase checkpoint. The polypeptide is Structural maintenance of chromosomes protein 1A (Smc1a) (Rattus norvegicus (Rat)).